A 259-amino-acid chain; its full sequence is Kallikrein 1-related peptidase b22 (259 aa).

Residues 1 to 17 (MRFLILFLTLSLGGIDA) form the signal peptide. Positions 18 to 24 (APPVQSR) are cleaved as a propeptide — activation peptide. Residues 25-256 (ILGGFKCEKN…FTSWIKDTMA (232 aa)) enclose the Peptidase S1 domain. Intrachain disulfides connect Cys-31-Cys-171, Cys-50-Cys-66, Cys-150-Cys-217, Cys-182-Cys-196, and Cys-207-Cys-232. Residue His-65 is the Charge relay system of the active site. N-linked (GlcNAc...) asparagine glycosylation is present at Asn-102. Catalysis depends on Asp-118, which acts as the Charge relay system. Ser-211 functions as the Charge relay system in the catalytic mechanism.

It belongs to the peptidase S1 family. Kallikrein subfamily.

It carries out the reaction Preferential cleavage of Arg-|-Xaa bonds in small molecule substrates. Highly selective action to release kallidin (lysyl-bradykinin) from kininogen involves hydrolysis of Met-|-Xaa or Leu-|-Xaa.. Functionally, glandular kallikreins cleave Met-Lys and Arg-Ser bonds in kininogen to release Lys-bradykinin. In Mus musculus (Mouse), this protein is Kallikrein 1-related peptidase b22 (Klk1b22).